A 204-amino-acid polypeptide reads, in one-letter code: Pantothenate transporter PanT (204 aa).

6 helical membrane passes run 18–38, 39–59, 63–83, 86–106, 123–143, and 176–196; these read IILLQVLIPWLGYIPLGAVIV, GAQPTIIQFTVAIAAILLGAR, FIGGFWGLLTLWQAWSTPGSI, LMFQNPFTAFIPRILVGLIIG, LGLGFLGGLAALINTVGVVLL, and IFEIITGIILVAAIGNVLVPI.

In E.coli forms a stable energy-coupling factor (ECF) transporter complex probably composed of a membrane-embedded substrate-binding protein (S component), two ATP-binding proteins (A components) and a transmembrane protein (T component).

It localises to the cell membrane. Functionally, probable pantothenate-binding protein that interacts with the energy-coupling factor (ECF) ABC-transporter complex. Unlike classic ABC transporters this ECF transporter provides the energy necessary to transport a number of different substrates. The substrates themselves are bound by transmembrane, not extracytoplasmic soluble proteins and transport it into cells. Upon coexpression with its energy-coupling factor (ECF) ABC-transporter complex EcfA1A2T in E.coli allows pantothenate uptake; uptake requires both PanT and EcfA1A2T. The polypeptide is Pantothenate transporter PanT (panT) (Leuconostoc mesenteroides subsp. mesenteroides (strain ATCC 8293 / DSM 20343 / BCRC 11652 / CCM 1803 / JCM 6124 / NCDO 523 / NBRC 100496 / NCIMB 8023 / NCTC 12954 / NRRL B-1118 / 37Y)).